A 311-amino-acid chain; its full sequence is MNKYDLIERMNTRFAELEVTLHQLHQQLDDLPLIAARVFSLPEIEKGTEHQPIEQITVNITEGEHAKKLGLQHFQRLFLHHQGQHVSSKAALRLPGVLCFSVTDKELIECQDIIKKTNQLKAELEHIITVESGLPSEQRFEFVHTHLHGLITLNTYRTITPLINPSSVRFGWANKHIIKNVTREDILLQLEKSLNAGRAVPPFTREQWRELISLEINDVQRLPEKTRLKIKRPVKVQPIARVWYQEQQKQVQHPCPMPLIAFCQRQSGAELPKLGELTDYDVKHIKHKYKPDAKPLRLLVPRLHLYVELEP.

Belongs to the Tus family.

The protein localises to the cytoplasm. In terms of biological role, trans-acting protein required for termination of DNA replication. Binds to DNA replication terminator sequences (terA to terF) to prevent the passage of replication forks. The termination efficiency will be affected by the affinity of this protein for the terminator sequence. The chain is DNA replication terminus site-binding protein from Yersinia pseudotuberculosis serotype O:1b (strain IP 31758).